The primary structure comprises 417 residues: Tyrosine--tRNA ligase (417 aa).

Tyrosine 34 is a binding site for L-tyrosine. Positions 39-48 (PTAKSIHIGN) match the 'HIGH' region motif. 2 residues coordinate L-tyrosine: tyrosine 165 and glutamine 169. The 'KMSKS' region motif lies at 227 to 231 (KFGKS). Lysine 230 lines the ATP pocket. Residues 349 to 416 (TDVVELLVKD…GKKKYFLAKV (68 aa)) enclose the S4 RNA-binding domain.

This sequence belongs to the class-I aminoacyl-tRNA synthetase family. TyrS type 1 subfamily. As to quaternary structure, homodimer.

The protein localises to the cytoplasm. It catalyses the reaction tRNA(Tyr) + L-tyrosine + ATP = L-tyrosyl-tRNA(Tyr) + AMP + diphosphate + H(+). Functionally, catalyzes the attachment of tyrosine to tRNA(Tyr) in a two-step reaction: tyrosine is first activated by ATP to form Tyr-AMP and then transferred to the acceptor end of tRNA(Tyr). In Oenococcus oeni (strain ATCC BAA-331 / PSU-1), this protein is Tyrosine--tRNA ligase.